Here is a 367-residue protein sequence, read N- to C-terminus: Anhydro-N-acetylmuramic acid kinase (367 aa).

13–20 (GTSMDGAD) provides a ligand contact to ATP.

It belongs to the anhydro-N-acetylmuramic acid kinase family.

It carries out the reaction 1,6-anhydro-N-acetyl-beta-muramate + ATP + H2O = N-acetyl-D-muramate 6-phosphate + ADP + H(+). Its pathway is amino-sugar metabolism; 1,6-anhydro-N-acetylmuramate degradation. The protein operates within cell wall biogenesis; peptidoglycan recycling. Its function is as follows. Catalyzes the specific phosphorylation of 1,6-anhydro-N-acetylmuramic acid (anhMurNAc) with the simultaneous cleavage of the 1,6-anhydro ring, generating MurNAc-6-P. Is required for the utilization of anhMurNAc either imported from the medium or derived from its own cell wall murein, and thus plays a role in cell wall recycling. This chain is Anhydro-N-acetylmuramic acid kinase, found in Neisseria gonorrhoeae (strain ATCC 700825 / FA 1090).